The primary structure comprises 386 residues: S-adenosylmethionine synthase (386 aa).

An ATP-binding site is contributed by H14. Mg(2+) is bound at residue D16. E42 is a binding site for K(+). Residues E55 and Q101 each coordinate L-methionine. A flexible loop region spans residues 101–111 (QSADIALGVDE). Residues 166 to 168 (DGK), 233 to 234 (RF), D242, 248 to 249 (RK), A265, and K269 contribute to the ATP site. D242 is a binding site for L-methionine. L-methionine is bound at residue K273.

Belongs to the AdoMet synthase family. As to quaternary structure, homotetramer; dimer of dimers. Mg(2+) serves as cofactor. It depends on K(+) as a cofactor.

It is found in the cytoplasm. It catalyses the reaction L-methionine + ATP + H2O = S-adenosyl-L-methionine + phosphate + diphosphate. It participates in amino-acid biosynthesis; S-adenosyl-L-methionine biosynthesis; S-adenosyl-L-methionine from L-methionine: step 1/1. Functionally, catalyzes the formation of S-adenosylmethionine (AdoMet) from methionine and ATP. The overall synthetic reaction is composed of two sequential steps, AdoMet formation and the subsequent tripolyphosphate hydrolysis which occurs prior to release of AdoMet from the enzyme. This chain is S-adenosylmethionine synthase, found in Acholeplasma laidlawii (strain PG-8A).